A 474-amino-acid chain; its full sequence is 1-aminocyclopropane-1-carboxylate synthase 4 (474 aa).

Glu-47 and Tyr-85 together coordinate substrate. Lys-273 is subject to N6-(pyridoxal phosphate)lysine.

This sequence belongs to the class-I pyridoxal-phosphate-dependent aminotransferase family. Homodimer and heterodimer. In vivo, the relevance of heterodimerization with other ACS enzymes is however unsure. Interacts with XBAT32. Interacts (via its C-terminal region) with ETO1 and EOL1. It depends on pyridoxal 5'-phosphate as a cofactor. In terms of processing, ubiquitinated by XBAT32. Ubiquitination probably leads to its subsequent degradation, thus controlling ethylene production. As to expression, expressed in roots, leaves and flowers.

It catalyses the reaction S-adenosyl-L-methionine = 1-aminocyclopropane-1-carboxylate + S-methyl-5'-thioadenosine + H(+). It participates in alkene biosynthesis; ethylene biosynthesis via S-adenosyl-L-methionine; ethylene from S-adenosyl-L-methionine: step 1/2. Functionally, 1-aminocyclopropane-1-carboxylate synthase (ACS) enzymes catalyze the conversion of S-adenosyl-L-methionine (SAM) into 1-aminocyclopropane-1-carboxylate (ACC), a direct precursor of ethylene. This is 1-aminocyclopropane-1-carboxylate synthase 4 (ACS4) from Arabidopsis thaliana (Mouse-ear cress).